Consider the following 258-residue polypeptide: Small ribosomal subunit protein mS23 (258 aa).

It belongs to the mitochondrion-specific ribosomal protein mS23 family. As to quaternary structure, component of the mitochondrial small ribosomal subunit.

The protein localises to the mitochondrion. In Aspergillus fumigatus (strain ATCC MYA-4609 / CBS 101355 / FGSC A1100 / Af293) (Neosartorya fumigata), this protein is Small ribosomal subunit protein mS23 (rsm25).